The sequence spans 101 residues: Helix-loop-helix protein 17 (101 aa).

The tract at residues 14 to 27 (GVRLSINLRERCRM) is basic motif. A bHLH domain is found at 14-68 (GVRLSINLRERCRMHDLNEALDDLRAVIPYAHGGSVRKLSKIATLLLAKNHIIMQ). The interval 28 to 68 (HDLNEALDDLRAVIPYAHGGSVRKLSKIATLLLAKNHIIMQ) is helix-loop-helix motif.

Expressed in neuronal tissues of the head, including sheath cells of the cephalic sensilla (CEPsh) glia.

The protein resides in the nucleus. Functionally, probable transcription factor that regulates the expression of dopamine receptors dop-1, dop-2 and dop-3 and thus dopamine-dependent behaviors. May act redundantly with hlh-31 and hlh-32 to regulate ventral CEPsh glia functions. May play a role in chemotactic responses in larvae. In Caenorhabditis elegans, this protein is Helix-loop-helix protein 17.